The primary structure comprises 120 residues: NAD(P)H-quinone oxidoreductase subunit 3, chloroplastic (120 aa).

3 consecutive transmembrane segments (helical) span residues 9-29, 64-84, and 88-108; these read IFWTFLIISSVIPILAFLISG, MFALVFVVFDVETVFLYPWAM, and VLGVSVFIEAFIFVLIPIVGS.

Belongs to the complex I subunit 3 family. As to quaternary structure, NDH is composed of at least 16 different subunits, 5 of which are encoded in the nucleus.

The protein resides in the plastid. It localises to the chloroplast thylakoid membrane. It carries out the reaction a plastoquinone + NADH + (n+1) H(+)(in) = a plastoquinol + NAD(+) + n H(+)(out). It catalyses the reaction a plastoquinone + NADPH + (n+1) H(+)(in) = a plastoquinol + NADP(+) + n H(+)(out). In terms of biological role, NDH shuttles electrons from NAD(P)H:plastoquinone, via FMN and iron-sulfur (Fe-S) centers, to quinones in the photosynthetic chain and possibly in a chloroplast respiratory chain. The immediate electron acceptor for the enzyme in this species is believed to be plastoquinone. Couples the redox reaction to proton translocation, and thus conserves the redox energy in a proton gradient. This is NAD(P)H-quinone oxidoreductase subunit 3, chloroplastic from Piper cenocladum (Ant piper).